The following is a 275-amino-acid chain: Large ribosomal subunit protein uL2 (275 aa).

A disordered region spans residues 219-263 (EVRGAAMNPRDHPHGGGEGRAPRGMPTPKTKWGKPARGVKTRHNP). The segment covering 227–239 (PRDHPHGGGEGRA) has biased composition (basic and acidic residues). A compositionally biased stretch (basic residues) spans 249–262 (KWGKPARGVKTRHN).

The protein belongs to the universal ribosomal protein uL2 family. Part of the 50S ribosomal subunit. Forms a bridge to the 30S subunit in the 70S ribosome.

Its function is as follows. One of the primary rRNA binding proteins. Required for association of the 30S and 50S subunits to form the 70S ribosome, for tRNA binding and peptide bond formation. It has been suggested to have peptidyltransferase activity; this is somewhat controversial. Makes several contacts with the 16S rRNA in the 70S ribosome. This is Large ribosomal subunit protein uL2 from Roseiflexus castenholzii (strain DSM 13941 / HLO8).